Reading from the N-terminus, the 441-residue chain is CBL-interacting serine/threonine-protein kinase 6 (441 aa).

The 255-residue stretch at 24–278 (YELGRLLGHG…IEKVMDSPWF (255 aa)) folds into the Protein kinase domain. ATP is bound by residues 30–38 (LGHGTFAKV) and Lys53. Asp146 serves as the catalytic Proton acceptor. The segment at 164-193 (DFGLSAFTEHLKQDGLLHTTCGTPAYVAPE) is activation loop. The residue at position 168 (Ser168) is a Phosphoserine. Position 182 is a phosphothreonine (Thr182). In terms of domain architecture, NAF spans 310-334 (EETETLNAFHIIALSEGFDLSPLFE). The PPI stretch occupies residues 341 to 371 (KREMRFATSRPASSVISSLEEAARVGNKFDV).

This sequence belongs to the protein kinase superfamily. CAMK Ser/Thr protein kinase family. SNF1 subfamily. As to quaternary structure, part of a K(+)-channel calcium-sensing kinase/phosphatase complex composed by a calcium sensor CBL (CBL1, CBL2, CBL3 or CBL9), a kinase CIPK (CIPK6, CIPK16 or CIPK23), a phosphatase PP2C (AIP1) and a K(+)-channel (AKT1). Interacts with AKT1, AKT2,CBL1, CBL2, CBL3, CBL4/SOS3 and CBL9. Requires Mn(2+) as cofactor. Post-translationally, autophosphorylated. As to expression, expressed in roots and shoots.

The protein localises to the endoplasmic reticulum. The enzyme catalyses L-seryl-[protein] + ATP = O-phospho-L-seryl-[protein] + ADP + H(+). The catalysed reaction is L-threonyl-[protein] + ATP = O-phospho-L-threonyl-[protein] + ADP + H(+). Its function is as follows. CIPK serine-threonine protein kinases interact with CBL proteins. Binding of a CBL protein to the regulatory NAF domain of CIPK protein lead to the activation of the kinase in a calcium-dependent manner. Downstream of CBL1, CBL2, CBL3 and CBL9, regulates by phosphorylation the K(+) conductance and uptake of AKT1. Binds to CBL4 to modulate AKT2 activity by promoting a kinase interaction-dependent but phosphorylation-independent translocation of the channel to the plasma membrane. The sequence is that of CBL-interacting serine/threonine-protein kinase 6 (CIPK6) from Arabidopsis thaliana (Mouse-ear cress).